The following is a 639-amino-acid chain: tRNA uridine 5-carboxymethylaminomethyl modification enzyme MnmG (639 aa).

15–20 (GAGHAG) serves as a coordination point for FAD. 276 to 290 (GPRYCPSIEDKIVRF) is an NAD(+) binding site.

It belongs to the MnmG family. Homodimer. Heterotetramer of two MnmE and two MnmG subunits. FAD is required as a cofactor.

The protein resides in the cytoplasm. NAD-binding protein involved in the addition of a carboxymethylaminomethyl (cmnm) group at the wobble position (U34) of certain tRNAs, forming tRNA-cmnm(5)s(2)U34. The protein is tRNA uridine 5-carboxymethylaminomethyl modification enzyme MnmG of Streptococcus gordonii (strain Challis / ATCC 35105 / BCRC 15272 / CH1 / DL1 / V288).